A 553-amino-acid chain; its full sequence is Transmembrane protein DDB_G0292058 (553 aa).

A signal peptide spans 1 to 26 (MIKINKILSLLIILLIINCNYQFVKA). Transmembrane regions (helical) follow at residues 80-100 (ILLSGITFIIAAITLIFGIIF) and 137-157 (VFILKLVTLIMVAGCVAVFIT). N-linked (GlcNAc...) asparagine glycans are attached at residues N162, N171, N178, and N195. The next 2 helical transmembrane spans lie at 243-263 (IIIVGLVFCMVVAGLIGVSAL) and 274-294 (SIALVILIPFMWIVFSVHYPI). Residues N315, N332, N351, N396, N405, and N462 are each glycosylated (N-linked (GlcNAc...) asparagine). A helical transmembrane segment spans residues 515 to 535 (LLIAPTAVFAILLTGLGITGI).

It localises to the membrane. The protein is Transmembrane protein DDB_G0292058 of Dictyostelium discoideum (Social amoeba).